A 577-amino-acid chain; its full sequence is Proline--tRNA ligase (577 aa).

This sequence belongs to the class-II aminoacyl-tRNA synthetase family. ProS type 1 subfamily. Homodimer.

Its subcellular location is the cytoplasm. It carries out the reaction tRNA(Pro) + L-proline + ATP = L-prolyl-tRNA(Pro) + AMP + diphosphate. Catalyzes the attachment of proline to tRNA(Pro) in a two-step reaction: proline is first activated by ATP to form Pro-AMP and then transferred to the acceptor end of tRNA(Pro). As ProRS can inadvertently accommodate and process non-cognate amino acids such as alanine and cysteine, to avoid such errors it has two additional distinct editing activities against alanine. One activity is designated as 'pretransfer' editing and involves the tRNA(Pro)-independent hydrolysis of activated Ala-AMP. The other activity is designated 'posttransfer' editing and involves deacylation of mischarged Ala-tRNA(Pro). The misacylated Cys-tRNA(Pro) is not edited by ProRS. In Janthinobacterium sp. (strain Marseille) (Minibacterium massiliensis), this protein is Proline--tRNA ligase.